Consider the following 437-residue polypeptide: GTPase Der (437 aa).

EngA-type G domains lie at 4-167 (PIVA…PDNA) and 175-352 (IHFS…QHHR). GTP-binding positions include 10-17 (GRPNVGKS), 57-61 (DTGGI), 119-122 (NKVD), 181-188 (GRPNVGKS), 229-233 (DTAGI), and 294-297 (NKWD). The 85-residue stretch at 353 to 437 (QRIQSAVLND…PIHLIKRQRQ (85 aa)) folds into the KH-like domain.

It belongs to the TRAFAC class TrmE-Era-EngA-EngB-Septin-like GTPase superfamily. EngA (Der) GTPase family. As to quaternary structure, associates with the 50S ribosomal subunit.

GTPase that plays an essential role in the late steps of ribosome biogenesis. The chain is GTPase Der from Limosilactobacillus reuteri (strain DSM 20016) (Lactobacillus reuteri).